The primary structure comprises 390 residues: Succinate--CoA ligase [ADP-forming] subunit beta (390 aa).

The region spanning 9 to 245 (KHLLKKYNIP…TTQEDEHETM (237 aa)) is the ATP-grasp domain. ATP-binding positions include Lys46, 53 to 55 (GRG), Glu99, Ser102, and Glu107. Positions 200 and 214 each coordinate Mg(2+). Substrate is bound by residues Asn265 and 322 to 324 (GIV).

This sequence belongs to the succinate/malate CoA ligase beta subunit family. Heterotetramer of two alpha and two beta subunits. Mg(2+) serves as cofactor.

It carries out the reaction succinate + ATP + CoA = succinyl-CoA + ADP + phosphate. The catalysed reaction is GTP + succinate + CoA = succinyl-CoA + GDP + phosphate. The protein operates within carbohydrate metabolism; tricarboxylic acid cycle; succinate from succinyl-CoA (ligase route): step 1/1. Functionally, succinyl-CoA synthetase functions in the citric acid cycle (TCA), coupling the hydrolysis of succinyl-CoA to the synthesis of either ATP or GTP and thus represents the only step of substrate-level phosphorylation in the TCA. The beta subunit provides nucleotide specificity of the enzyme and binds the substrate succinate, while the binding sites for coenzyme A and phosphate are found in the alpha subunit. The polypeptide is Succinate--CoA ligase [ADP-forming] subunit beta (Coxiella burnetii (strain CbuG_Q212) (Coxiella burnetii (strain Q212))).